The sequence spans 353 residues: Protein RecA (353 aa).

Residue 65–72 coordinates ATP; that stretch reads GPESSGKT. Basic and acidic residues predominate over residues 334-345; that stretch reads DAERAGAEREDN. Residues 334–353 are disordered; that stretch reads DAERAGAEREDNAAADDENF.

It belongs to the RecA family.

It is found in the cytoplasm. Functionally, can catalyze the hydrolysis of ATP in the presence of single-stranded DNA, the ATP-dependent uptake of single-stranded DNA by duplex DNA, and the ATP-dependent hybridization of homologous single-stranded DNAs. It interacts with LexA causing its activation and leading to its autocatalytic cleavage. This is Protein RecA from Edwardsiella ictaluri (strain 93-146).